The chain runs to 280 residues: Mesaconyl-C(4)-CoA hydratase (280 aa).

This sequence belongs to the HTD2 family. In terms of assembly, homodimer.

The enzyme catalyses (3S)-citramalyl-CoA = 3-methylfumaryl-CoA + H2O. Its activity is regulated as follows. Inhibited by 3-methylfumaryl-CoA concentrations above 0.3 mM. Involved in the glyoxylate assimilation cycle used to regenerate acetyl-CoA and produce pyruvate as universal precursor for biosynthesis. Catalyzes the hydration of 3-methylfumaryl-CoA (mesaconyl-C4-CoA) to (3S)-citramalyl-CoA. This Chloroflexus aurantiacus (strain ATCC 29366 / DSM 635 / J-10-fl) protein is Mesaconyl-C(4)-CoA hydratase (meh).